We begin with the raw amino-acid sequence, 96 residues long: UPF0235 protein KPK_0722 (96 aa).

This sequence belongs to the UPF0235 family.

This is UPF0235 protein KPK_0722 from Klebsiella pneumoniae (strain 342).